The chain runs to 148 residues: 3-hydroxyacyl-[acyl-carrier-protein] dehydratase FabZ (148 aa).

Residue H50 is part of the active site.

Belongs to the thioester dehydratase family. FabZ subfamily.

It is found in the cytoplasm. It catalyses the reaction a (3R)-hydroxyacyl-[ACP] = a (2E)-enoyl-[ACP] + H2O. Involved in unsaturated fatty acids biosynthesis. Catalyzes the dehydration of short chain beta-hydroxyacyl-ACPs and long chain saturated and unsaturated beta-hydroxyacyl-ACPs. The sequence is that of 3-hydroxyacyl-[acyl-carrier-protein] dehydratase FabZ from Levilactobacillus brevis (strain ATCC 367 / BCRC 12310 / CIP 105137 / JCM 1170 / LMG 11437 / NCIMB 947 / NCTC 947) (Lactobacillus brevis).